A 508-amino-acid polypeptide reads, in one-letter code: Cytochrome P450 monooxygenase BipB (508 aa).

The helical transmembrane segment at 11–31 threads the bilayer; sequence ELAWLLLGPLVLFYVFKLFIY. C448 is a binding site for heme.

This sequence belongs to the cytochrome P450 family. Requires heme as cofactor.

It is found in the membrane. Its pathway is sesquiterpene biosynthesis. Cytochrome P450 monooxygenase; part of the minimal biosynthetic bip cluster that mediates the biosynthesis of bridged polycyclic sesquiterpenoids derived from sativene, isosativene, and longifolene. The sesquiterpene cyclase BipA acts as a versatile cyclase that converts farnesyl diphosphate (FPP) into (-)-sativene as the dominant product and (-)-isosativene and (-)-longifolene as minor ones. The cytochrome P450 monooxygenase BipB then hydroxylates different enantiomeric sesquiterpenes, such as (-)-longifolene and (+)-longifolene, at C-15 and C-14. The C-15- or both C-15- and C-14-hydroxylated products are further oxidized by unclustered oxidases, resulting in a structurally diverse array of sesquiterpenoids. The BipB-catalyzed hydroxylation at C-15 serves as an initiator for the oxidation by the unclustered oxidases. This Cochliobolus sativus (Common root rot and spot blotch fungus) protein is Cytochrome P450 monooxygenase BipB.